Reading from the N-terminus, the 283-residue chain is Phosphate import ATP-binding protein PstB (283 aa).

A compositionally biased stretch (polar residues) spans 1–20; it reads MAQTLAQTKQISQSHTFDVS. Positions 1–33 are disordered; that stretch reads MAQTLAQTKQISQSHTFDVSQSHHKTPNDTNSH. The 242-residue stretch at 37-278 folds into the ABC transporter domain; that stretch reads YSTQNLDLWY…PSNKKTEDYI (242 aa). 69–76 lines the ATP pocket; the sequence is GPSGCGKS.

This sequence belongs to the ABC transporter superfamily. Phosphate importer (TC 3.A.1.7) family. As to quaternary structure, the complex is composed of two ATP-binding proteins (PstB), two transmembrane proteins (PstC and PstA) and a solute-binding protein (PstS).

Its subcellular location is the cell membrane. The enzyme catalyses phosphate(out) + ATP + H2O = ADP + 2 phosphate(in) + H(+). Functionally, part of the ABC transporter complex PstSACB involved in phosphate import. Responsible for energy coupling to the transport system. In Staphylococcus aureus (strain bovine RF122 / ET3-1), this protein is Phosphate import ATP-binding protein PstB.